Reading from the N-terminus, the 260-residue chain is Zinc import ATP-binding protein ZnuC (260 aa).

The 216-residue stretch at leucine 14–glutamine 229 folds into the ABC transporter domain. Residue glycine 46 to serine 53 participates in ATP binding.

The protein belongs to the ABC transporter superfamily. Zinc importer (TC 3.A.1.15.5) family. As to quaternary structure, the complex is composed of two ATP-binding proteins (ZnuC), two transmembrane proteins (ZnuB) and a solute-binding protein (ZnuA).

Its subcellular location is the cell inner membrane. It catalyses the reaction Zn(2+)(out) + ATP(in) + H2O(in) = Zn(2+)(in) + ADP(in) + phosphate(in) + H(+)(in). In terms of biological role, part of the ABC transporter complex ZnuABC involved in zinc import. Responsible for energy coupling to the transport system. This is Zinc import ATP-binding protein ZnuC from Magnetococcus marinus (strain ATCC BAA-1437 / JCM 17883 / MC-1).